A 439-amino-acid chain; its full sequence is uncharacterized protein (439 aa).

In terms of domain architecture, TRAM spans 1-55 (MLEQVRIQKMVNGGYGLAHLSNGKVVLVEGAYPGEEVLIKTYREKRDFSFGKVVS). [4Fe-4S] cluster-binding residues include Cys-68, Cys-74, Cys-77, and Cys-149. S-adenosyl-L-methionine-binding residues include Gln-272, Tyr-301, Glu-322, and Asp-367. Residue Cys-394 is the Nucleophile of the active site.

It belongs to the class I-like SAM-binding methyltransferase superfamily. RNA M5U methyltransferase family.

This is an uncharacterized protein from Thermotoga maritima (strain ATCC 43589 / DSM 3109 / JCM 10099 / NBRC 100826 / MSB8).